The sequence spans 727 residues: DNA ligase (727 aa).

NAD(+) is bound by residues 71-75 (DGEFD), 120-121 (SL), and Glu150. Lys152 (N6-AMP-lysine intermediate) is an active-site residue. NAD(+) is bound by residues Arg173, Glu213, Lys329, and Lys353. Zn(2+) contacts are provided by Cys447, Cys450, Cys466, and Cys472. The BRCT domain maps to 636–725 (SIERHLTGLS…PEAAAEAALP (90 aa)).

It belongs to the NAD-dependent DNA ligase family. LigA subfamily. It depends on Mg(2+) as a cofactor. Mn(2+) serves as cofactor.

The enzyme catalyses NAD(+) + (deoxyribonucleotide)n-3'-hydroxyl + 5'-phospho-(deoxyribonucleotide)m = (deoxyribonucleotide)n+m + AMP + beta-nicotinamide D-nucleotide.. DNA ligase that catalyzes the formation of phosphodiester linkages between 5'-phosphoryl and 3'-hydroxyl groups in double-stranded DNA using NAD as a coenzyme and as the energy source for the reaction. It is essential for DNA replication and repair of damaged DNA. This chain is DNA ligase, found in Saccharopolyspora erythraea (strain ATCC 11635 / DSM 40517 / JCM 4748 / NBRC 13426 / NCIMB 8594 / NRRL 2338).